Reading from the N-terminus, the 317-residue chain is 4-hydroxy-3-methylbut-2-enyl diphosphate reductase (317 aa).

C12 is a [4Fe-4S] cluster binding site. Residues H41 and H74 each coordinate (2E)-4-hydroxy-3-methylbut-2-enyl diphosphate. Positions 41 and 74 each coordinate dimethylallyl diphosphate. Isopentenyl diphosphate-binding residues include H41 and H74. C97 provides a ligand contact to [4Fe-4S] cluster. H125 is a (2E)-4-hydroxy-3-methylbut-2-enyl diphosphate binding site. H125 is a binding site for dimethylallyl diphosphate. Residue H125 coordinates isopentenyl diphosphate. Catalysis depends on E127, which acts as the Proton donor. (2E)-4-hydroxy-3-methylbut-2-enyl diphosphate is bound at residue T168. C198 contributes to the [4Fe-4S] cluster binding site. (2E)-4-hydroxy-3-methylbut-2-enyl diphosphate contacts are provided by S226, S227, N228, and S270. Positions 226, 227, 228, and 270 each coordinate dimethylallyl diphosphate. Isopentenyl diphosphate contacts are provided by S226, S227, N228, and S270.

The protein belongs to the IspH family. As to quaternary structure, homodimer. It depends on [4Fe-4S] cluster as a cofactor.

The catalysed reaction is isopentenyl diphosphate + 2 oxidized [2Fe-2S]-[ferredoxin] + H2O = (2E)-4-hydroxy-3-methylbut-2-enyl diphosphate + 2 reduced [2Fe-2S]-[ferredoxin] + 2 H(+). The enzyme catalyses dimethylallyl diphosphate + 2 oxidized [2Fe-2S]-[ferredoxin] + H2O = (2E)-4-hydroxy-3-methylbut-2-enyl diphosphate + 2 reduced [2Fe-2S]-[ferredoxin] + 2 H(+). Its pathway is isoprenoid biosynthesis; dimethylallyl diphosphate biosynthesis; dimethylallyl diphosphate from (2E)-4-hydroxy-3-methylbutenyl diphosphate: step 1/1. It participates in isoprenoid biosynthesis; isopentenyl diphosphate biosynthesis via DXP pathway; isopentenyl diphosphate from 1-deoxy-D-xylulose 5-phosphate: step 6/6. In terms of biological role, catalyzes the conversion of 1-hydroxy-2-methyl-2-(E)-butenyl 4-diphosphate (HMBPP) into a mixture of isopentenyl diphosphate (IPP) and dimethylallyl diphosphate (DMAPP). Acts in the terminal step of the DOXP/MEP pathway for isoprenoid precursor biosynthesis. This Yersinia pseudotuberculosis serotype O:1b (strain IP 31758) protein is 4-hydroxy-3-methylbut-2-enyl diphosphate reductase.